We begin with the raw amino-acid sequence, 429 residues long: Probable beta-1,3-galactosyl-O-glycosyl-glycoprotein beta-1,6-N-acetylglucosaminyltransferase 7 (429 aa).

The Cytoplasmic portion of the chain corresponds to 1 to 8 (MSQLRATK). A helical; Signal-anchor for type II membrane protein transmembrane segment spans residues 9–25 (PGILVCAAIGIFVFLYL). Residues 26-429 (RNPTSEDPEE…ESHLNRRLNP (404 aa)) lie on the Extracellular side of the membrane. Disulfide bonds link Cys-53-Cys-205, Cys-139-Cys-354, Cys-160-Cys-187, and Cys-363-Cys-394. N-linked (GlcNAc...) asparagine glycosylation occurs at Asn-87. N-linked (GlcNAc...) asparagine glycosylation occurs at Asn-272.

It belongs to the glycosyltransferase 14 family.

The protein localises to the golgi apparatus membrane. It functions in the pathway protein modification; protein glycosylation. In terms of biological role, probable glycosyltransferase. In Sus scrofa (Pig), this protein is Probable beta-1,3-galactosyl-O-glycosyl-glycoprotein beta-1,6-N-acetylglucosaminyltransferase 7.